We begin with the raw amino-acid sequence, 476 residues long: Bifunctional protein HldE (476 aa).

Residues 1-319 form a ribokinase region; sequence MKVSLPAFEK…EALALHHGES (319 aa). 195–198 contributes to the ATP binding site; that stretch reads NMSE. D264 is an active-site residue. A cytidylyltransferase region spans residues 345–476; that stretch reads MTNGCFDILH…AIIQNIMAKQ (132 aa).

The protein in the N-terminal section; belongs to the carbohydrate kinase PfkB family. It in the C-terminal section; belongs to the cytidylyltransferase family. In terms of assembly, homodimer.

The catalysed reaction is D-glycero-beta-D-manno-heptose 7-phosphate + ATP = D-glycero-beta-D-manno-heptose 1,7-bisphosphate + ADP + H(+). It catalyses the reaction D-glycero-beta-D-manno-heptose 1-phosphate + ATP + H(+) = ADP-D-glycero-beta-D-manno-heptose + diphosphate. Its pathway is nucleotide-sugar biosynthesis; ADP-L-glycero-beta-D-manno-heptose biosynthesis; ADP-L-glycero-beta-D-manno-heptose from D-glycero-beta-D-manno-heptose 7-phosphate: step 1/4. The protein operates within nucleotide-sugar biosynthesis; ADP-L-glycero-beta-D-manno-heptose biosynthesis; ADP-L-glycero-beta-D-manno-heptose from D-glycero-beta-D-manno-heptose 7-phosphate: step 3/4. Catalyzes the phosphorylation of D-glycero-D-manno-heptose 7-phosphate at the C-1 position to selectively form D-glycero-beta-D-manno-heptose-1,7-bisphosphate. Its function is as follows. Catalyzes the ADP transfer from ATP to D-glycero-beta-D-manno-heptose 1-phosphate, yielding ADP-D-glycero-beta-D-manno-heptose. This Shewanella sp. (strain ANA-3) protein is Bifunctional protein HldE.